Reading from the N-terminus, the 74-residue chain is Protein RALF-like 25 (74 aa).

The N-terminal stretch at 1 to 22 is a signal peptide; the sequence is MKTFMIILLVICSILIVGRVEA. Cystine bridges form between Cys-35–Cys-44 and Cys-62–Cys-68.

It belongs to the plant rapid alkalinization factor (RALF) family.

The protein localises to the secreted. Its function is as follows. Cell signaling peptide that may regulate plant stress, growth, and development. Mediates a rapid alkalinization of extracellular space by mediating a transient increase in the cytoplasmic Ca(2+) concentration leading to a calcium-dependent signaling events through a cell surface receptor and a concomitant activation of some intracellular mitogen-activated protein kinases. The sequence is that of Protein RALF-like 25 (RALFL25) from Arabidopsis thaliana (Mouse-ear cress).